A 132-amino-acid polypeptide reads, in one-letter code: Agouti-signaling protein (132 aa).

The N-terminal stretch at 1–22 is a signal peptide; the sequence is MDVTRLLLATLLVFLCFFTVYS. N-linked (GlcNAc...) asparagine glycosylation is present at Asn39. The interval 62 to 93 is disordered; the sequence is ISRKEAEKKRSSKKEASMKKVAQPRTPLSAPC. Residues 63 to 79 are compositionally biased toward basic and acidic residues; it reads SRKEAEKKRSSKKEASM. Cystine bridges form between Cys93–Cys108, Cys100–Cys114, Cys107–Cys125, Cys111–Cys132, and Cys116–Cys123. One can recognise an Agouti domain in the interval 93 to 132; that stretch reads CVATRDSCKPPAPACCDPCASCQCRFFRSACSCRVLSLNC.

It localises to the secreted. Its function is as follows. Involved in the regulation of melanogenesis. The binding of ASP to MC1R precludes alpha-MSH initiated signaling and thus blocks production of cAMP, leading to a down-regulation of eumelanogenesis (brown/black pigment) and thus increasing synthesis of pheomelanin (yellow/red pigment). The chain is Agouti-signaling protein (ASIP) from Trachypithecus auratus (Javan langur).